The primary structure comprises 476 residues: Probable protein S-acyltransferase 5 (476 aa).

Positions 1–11 are enriched in basic and acidic residues; it reads MLDLQPSDRRH. Residues 1 to 21 are disordered; that stretch reads MLDLQPSDRRHGAPSSSGGVS. The next 2 helical transmembrane spans lie at 53–73 and 85–105; these read SILITVFLITAPVIVFCIFVG and GVSVLAVAVGLILLDLVFLLL. A disordered region spans residues 119–138; sequence YPPEPESNEGNGEPRLAHTP. Residues 158-208 enclose the DHHC domain; that stretch reads KYCDTCMLYRPPRASHCSICNNCVEKFDHHCPWLGQCIGLRNYRFYFMFVL. Cysteine 188 (S-palmitoyl cysteine intermediate) is an active-site residue. Helical transmembrane passes span 209-223 and 246-266; these read CSTLLCIYVHVFCWI and SIALIIYTFICVWFVGGLTCF. Disordered stretches follow at residues 320 to 340 and 373 to 454; these read SKEPAIPPRTVNGGMSSPSLQ and VASR…ASRD. Phosphoserine is present on serine 336. Residues 387-412 show a composition bias toward basic and acidic residues; that stretch reads SEGRGIMHSRESSRGRGIMHSRESSR. Phosphoserine is present on serine 418. Residues 425-441 are compositionally biased toward basic and acidic residues; sequence VNEDLRTRDESVSRVGE.

It belongs to the DHHC palmitoyltransferase family.

It is found in the cell membrane. It carries out the reaction L-cysteinyl-[protein] + hexadecanoyl-CoA = S-hexadecanoyl-L-cysteinyl-[protein] + CoA. Palmitoyl acyltransferase. The chain is Probable protein S-acyltransferase 5 (PAT05) from Arabidopsis thaliana (Mouse-ear cress).